A 403-amino-acid chain; its full sequence is Dual-specificity RNA methyltransferase RlmN (403 aa).

The active-site Proton acceptor is Glu-126. Residues 132–375 form the Radical SAM core domain; sequence ETDRGTLCVS…VRTPRGRDIL (244 aa). Cys-139 and Cys-378 are oxidised to a cystine. Residues Cys-146, Cys-150, and Cys-153 each coordinate [4Fe-4S] cluster. S-adenosyl-L-methionine-binding positions include 204-205, Ser-236, 258-260, and Asn-335; these read GE and SLH. Cys-378 (S-methylcysteine intermediate) is an active-site residue.

This sequence belongs to the radical SAM superfamily. RlmN family. Requires [4Fe-4S] cluster as cofactor.

It is found in the cytoplasm. The enzyme catalyses adenosine(2503) in 23S rRNA + 2 reduced [2Fe-2S]-[ferredoxin] + 2 S-adenosyl-L-methionine = 2-methyladenosine(2503) in 23S rRNA + 5'-deoxyadenosine + L-methionine + 2 oxidized [2Fe-2S]-[ferredoxin] + S-adenosyl-L-homocysteine. It carries out the reaction adenosine(37) in tRNA + 2 reduced [2Fe-2S]-[ferredoxin] + 2 S-adenosyl-L-methionine = 2-methyladenosine(37) in tRNA + 5'-deoxyadenosine + L-methionine + 2 oxidized [2Fe-2S]-[ferredoxin] + S-adenosyl-L-homocysteine. Its function is as follows. Specifically methylates position 2 of adenine 2503 in 23S rRNA and position 2 of adenine 37 in tRNAs. m2A2503 modification seems to play a crucial role in the proofreading step occurring at the peptidyl transferase center and thus would serve to optimize ribosomal fidelity. The polypeptide is Dual-specificity RNA methyltransferase RlmN (Bradyrhizobium sp. (strain ORS 278)).